A 276-amino-acid chain; its full sequence is Small ribosomal subunit protein uS3 (276 aa).

A KH type-2 domain is found at 43-111 (IRQLMSTGME…QVQLNILEVK (69 aa)). Residues 218 to 227 (AQAASAPSRG) are compositionally biased toward low complexity. The interval 218–276 (AQAASAPSRGPRSDRGGRPGGADRGDRRRRNDRPAADAAPAAEAPAVEAAPAAAEGGQA) is disordered. Residues 228–243 (PRSDRGGRPGGADRGD) show a composition bias toward basic and acidic residues. The span at 253-276 (ADAAPAAEAPAVEAAPAAAEGGQA) shows a compositional bias: low complexity.

Belongs to the universal ribosomal protein uS3 family. As to quaternary structure, part of the 30S ribosomal subunit. Forms a tight complex with proteins S10 and S14.

Binds the lower part of the 30S subunit head. Binds mRNA in the 70S ribosome, positioning it for translation. This is Small ribosomal subunit protein uS3 from Pseudarthrobacter chlorophenolicus (strain ATCC 700700 / DSM 12829 / CIP 107037 / JCM 12360 / KCTC 9906 / NCIMB 13794 / A6) (Arthrobacter chlorophenolicus).